The primary structure comprises 276 residues: Transmembrane protein 45B (276 aa).

The next 6 helical transmembrane spans lie at 7 to 27 (HALPGSFFLIVGLWWSLKYPL), 48 to 68 (IIEAAIRTLFAVIGILVEQFV), 95 to 115 (LFFAVSGIMDMLTYLITHVPL), 147 to 167 (IHSLLLYTVFGGALSLAVEVV), 181 to 201 (LLLLQGTWFWQIGFVLFPPFG), and 213 to 233 (IMFVTMCFCWHYLAALCILAA). Ser-271 and Ser-273 each carry phosphoserine.

Belongs to the TMEM45 family.

It localises to the endosome membrane. The protein resides in the lysosome membrane. Its subcellular location is the golgi apparatus. It is found in the trans-Golgi network membrane. Its function is as follows. Plays a role in innate immunity. The chain is Transmembrane protein 45B (TMEM45B) from Bos taurus (Bovine).